Reading from the N-terminus, the 289-residue chain is ATP synthase subunit a (289 aa).

The next 6 membrane-spanning stretches (helical) occupy residues 43 to 63 (AFHL…LLIF), 104 to 124 (IAPL…VDLI), 160 to 180 (FCVF…GGFI), 193 to 213 (IFVQ…TLIA), 232 to 252 (VFIL…GLGV), and 259 to 279 (AVFH…LTIV).

The protein belongs to the ATPase A chain family. As to quaternary structure, F-type ATPases have 2 components, CF(1) - the catalytic core - and CF(0) - the membrane proton channel. CF(1) has five subunits: alpha(3), beta(3), gamma(1), delta(1), epsilon(1). CF(0) has three main subunits: a(1), b(2) and c(9-12). The alpha and beta chains form an alternating ring which encloses part of the gamma chain. CF(1) is attached to CF(0) by a central stalk formed by the gamma and epsilon chains, while a peripheral stalk is formed by the delta and b chains.

The protein resides in the cell inner membrane. In terms of biological role, key component of the proton channel; it plays a direct role in the translocation of protons across the membrane. The chain is ATP synthase subunit a from Pseudomonas putida (strain ATCC 47054 / DSM 6125 / CFBP 8728 / NCIMB 11950 / KT2440).